Reading from the N-terminus, the 111-residue chain is Large ribosomal subunit protein uL24 (111 aa).

This sequence belongs to the universal ribosomal protein uL24 family. Part of the 50S ribosomal subunit.

In terms of biological role, one of two assembly initiator proteins, it binds directly to the 5'-end of the 23S rRNA, where it nucleates assembly of the 50S subunit. Functionally, one of the proteins that surrounds the polypeptide exit tunnel on the outside of the subunit. In Chlamydia pneumoniae (Chlamydophila pneumoniae), this protein is Large ribosomal subunit protein uL24.